The following is a 194-amino-acid chain: MTELVLIMVSAILVNNFVLVQFLGLCPFMGVSKKIETAIGLSLATTFVLTLAAMCSYLVQQYVLKPLDLEFLRTISFILVIAVTVQFTEMVVNKTSPLLYRVLGIFLPLITTNCIVLGVALLNANKAEFTFITATVNGFAAGLGFSLVLVLFAAMRERIAIADVPKSFQGAAIGMITAGLMSLAFMGFAGLIKL.

6 helical membrane passes run 4-24 (LVLIMVSAILVNNFVLVQFLG), 39-59 (IGLSLATTFVLTLAAMCSYLV), 71-91 (FLRTISFILVIAVTVQFTEMV), 102-122 (VLGIFLPLITTNCIVLGVALL), 131-151 (FITATVNGFAAGLGFSLVLVL), and 172-192 (AIGMITAGLMSLAFMGFAGLI).

This sequence belongs to the NqrDE/RnfAE family. The complex is composed of six subunits: RnfA, RnfB, RnfC, RnfD, RnfE and RnfG.

Its subcellular location is the cell inner membrane. In terms of biological role, part of a membrane-bound complex that couples electron transfer with translocation of ions across the membrane. The sequence is that of Ion-translocating oxidoreductase complex subunit A from Ectopseudomonas mendocina (strain ymp) (Pseudomonas mendocina).